The primary structure comprises 345 residues: L-threonine 3-dehydrogenase (345 aa).

Cys-42 serves as a coordination point for Zn(2+). Active-site charge relay system residues include Thr-44 and His-47. Zn(2+) is bound by residues His-67, Glu-68, Cys-97, Cys-100, Cys-103, and Cys-111. NAD(+) contacts are provided by residues Ile-179, Asp-199, Arg-204, 266-268, and 290-291; these read LGI and IY.

The protein belongs to the zinc-containing alcohol dehydrogenase family. As to quaternary structure, homotetramer. The cofactor is Zn(2+).

It is found in the cytoplasm. The catalysed reaction is L-threonine + NAD(+) = (2S)-2-amino-3-oxobutanoate + NADH + H(+). It participates in amino-acid degradation; L-threonine degradation via oxydo-reductase pathway; glycine from L-threonine: step 1/2. Catalyzes the NAD(+)-dependent oxidation of L-threonine to 2-amino-3-ketobutyrate. This chain is L-threonine 3-dehydrogenase, found in Rhizobium johnstonii (strain DSM 114642 / LMG 32736 / 3841) (Rhizobium leguminosarum bv. viciae).